A 1086-amino-acid chain; its full sequence is Lon protease homolog, mitochondrial (1086 aa).

The transit peptide at 1-55 directs the protein to the mitochondrion; sequence MLRTSCTSSLRRVVGKYVVSPLVASQIRFATSSVRSQPYLLNSELTELPAQFKRY. Residues 61–176 form a disordered region; the sequence is TEKPEGDVPE…EPNEIVTNAG (116 aa). The segment covering 69–83 has biased composition (low complexity); that stretch reads PESGPEPSGESGISE. A compositionally biased stretch (basic and acidic residues) spans 85 to 120; the sequence is SNVENDKHDGNDEIKPEAEKNEKDEIEKPEIDKDAI. The segment covering 124–163 has biased composition (low complexity); it reads DGVSESSVENVSGSSSAAGGASAPPSGNSNNNNNNNNNNN. The Lon N-terminal domain maps to 183–406; that stretch reads LLAIPMKDRP…KALELLKVEL (224 aa). 558–565 contributes to the ATP binding site; the sequence is GPPGTGKT. 2 stretches are compositionally biased toward basic and acidic residues: residues 767–782 and 815–827; these read EARE…EAKS and KVDE…SEEL. Disordered stretches follow at residues 767 to 788 and 800 to 835; these read EARE…ITGS and KAQS…EEEE. The Lon proteolytic domain maps to 871–1059; that stretch reads IPPPGVATGL…QDVFDEIFPN (189 aa). Residues serine 965 and lysine 1008 contribute to the active site.

It belongs to the peptidase S16 family. In terms of assembly, homohexamer or homoheptamer. Organized in a ring with a central cavity.

Its subcellular location is the mitochondrion matrix. It carries out the reaction Hydrolysis of proteins in presence of ATP.. Its function is as follows. ATP-dependent serine protease that mediates the selective degradation of misfolded, unassembled or oxidatively damaged polypeptides as well as certain short-lived regulatory proteins in the mitochondrial matrix. May also have a chaperone function in the assembly of inner membrane protein complexes. Participates in the regulation of mitochondrial gene expression and in the maintenance of the integrity of the mitochondrial genome. Binds to mitochondrial DNA in a site-specific manner. This is Lon protease homolog, mitochondrial from Scheffersomyces stipitis (strain ATCC 58785 / CBS 6054 / NBRC 10063 / NRRL Y-11545) (Yeast).